Reading from the N-terminus, the 152-residue chain is SsrA-binding protein (152 aa).

The protein belongs to the SmpB family.

The protein localises to the cytoplasm. Functionally, required for rescue of stalled ribosomes mediated by trans-translation. Binds to transfer-messenger RNA (tmRNA), required for stable association of tmRNA with ribosomes. tmRNA and SmpB together mimic tRNA shape, replacing the anticodon stem-loop with SmpB. tmRNA is encoded by the ssrA gene; the 2 termini fold to resemble tRNA(Ala) and it encodes a 'tag peptide', a short internal open reading frame. During trans-translation Ala-aminoacylated tmRNA acts like a tRNA, entering the A-site of stalled ribosomes, displacing the stalled mRNA. The ribosome then switches to translate the ORF on the tmRNA; the nascent peptide is terminated with the 'tag peptide' encoded by the tmRNA and targeted for degradation. The ribosome is freed to recommence translation, which seems to be the essential function of trans-translation. This is SsrA-binding protein from Helicobacter pylori (strain HPAG1).